The following is a 279-amino-acid chain: Acetyl-coenzyme A carboxylase carboxyl transferase subunit beta (279 aa).

The 257-residue stretch at 23–279 (LWWKCEECGA…IVRLAGMLKV (257 aa)) folds into the CoA carboxyltransferase N-terminal domain. 4 residues coordinate Zn(2+): Cys-27, Cys-30, Cys-46, and Cys-49. A C4-type zinc finger spans residues 27–49 (CEECGAMIHKKQLEDHVYTCSDC).

It belongs to the AccD/PCCB family. In terms of assembly, acetyl-CoA carboxylase is a heterohexamer composed of biotin carboxyl carrier protein (AccB), biotin carboxylase (AccC) and two subunits each of ACCase subunit alpha (AccA) and ACCase subunit beta (AccD). It depends on Zn(2+) as a cofactor.

It is found in the cytoplasm. The catalysed reaction is N(6)-carboxybiotinyl-L-lysyl-[protein] + acetyl-CoA = N(6)-biotinyl-L-lysyl-[protein] + malonyl-CoA. The protein operates within lipid metabolism; malonyl-CoA biosynthesis; malonyl-CoA from acetyl-CoA: step 1/1. Component of the acetyl coenzyme A carboxylase (ACC) complex. Biotin carboxylase (BC) catalyzes the carboxylation of biotin on its carrier protein (BCCP) and then the CO(2) group is transferred by the transcarboxylase to acetyl-CoA to form malonyl-CoA. The protein is Acetyl-coenzyme A carboxylase carboxyl transferase subunit beta of Chlorobium limicola (strain DSM 245 / NBRC 103803 / 6330).